The following is a 961-amino-acid chain: Endochitinase A (961 aa).

The first 21 residues, 1–21 (MAPKLFTFVSALSGLASLASA), serve as a signal peptide directing secretion. The GH18 domain maps to 28–339 (SNIAVYYGQG…EKIREILYDL (312 aa)). The active-site Proton donor is the E175. 4 disordered regions span residues 338–720 (DLDP…TTTE), 767–787 (TDVPGSGSGSSPAQPTITADI), 813–842 (PPATTTEESTSAQPTGEVPSSDGSGSGEVS), and 912–933 (HVPVPSGSGSSPSGTQGGASPT). Residues 342–355 (NHPPPTTSPTPTPT) are compositionally biased toward pro residues. Low complexity-rich tracts occupy residues 356-510 (PSTT…STSS), 519-544 (SSTSVPATSSSVPSSAISPSSTPVIS), 552-604 (TSSS…PETT), and 612-635 (TPGSSVSTGTTSASTLSSSVPATS). The segment covering 636–665 (GGHTETSTVSTSSANQTPSASTSKPLIPTN) has biased composition (polar residues). A compositionally biased stretch (low complexity) spans 666 to 720 (SASSTSTGSVTSTPSAPGVPSSSAGSDETATTSTTDSEPTSTSSGSVTAKPTTTE). G936 is lipidated: GPI-anchor amidated glycine. Positions 937–961 (AGSRYDVVKGVPALVALALSLLAVL) are cleaved as a propeptide — removed in mature form.

It belongs to the glycosyl hydrolase 18 family. Chitinase class III subfamily. Post-translationally, O-glycosylated but not N-glycosylated.

Its subcellular location is the cell membrane. The protein localises to the secreted. It localises to the cell wall. It is found in the cell tip. It catalyses the reaction Random endo-hydrolysis of N-acetyl-beta-D-glucosaminide (1-&gt;4)-beta-linkages in chitin and chitodextrins.. Its function is as follows. GPI-anchored chitinase involved in the degradation of chitin, a component of the cell walls of fungi and exoskeletal elements of some animals (including worms and arthropods). Required to reshape the cell wall at the sites where cell wall remodeling and/or cell wall maturation actively take place such as sites of conidia formation. This Emericella nidulans (Aspergillus nidulans) protein is Endochitinase A (chiA).